Reading from the N-terminus, the 390-residue chain is Pyruvate dehydrogenase E1 component subunit alpha-1, mitochondrial (390 aa).

Residues 1–15 (MAAAILLRRVPPARA) constitute a mitochondrion transit peptide. Pyruvate contacts are provided by His-91, Tyr-117, Arg-118, Gly-166, Val-168, Asp-197, Gly-198, Ala-199, Asn-226, and Tyr-228. Residues Tyr-117, Arg-118, Gly-166, Val-168, Asp-197, Gly-198, Ala-199, and Asn-226 each coordinate thiamine diphosphate. Position 197 (Asp-197) interacts with Mg(2+). Mg(2+) is bound by residues Asn-226 and Tyr-228. Residue His-292 coordinates thiamine diphosphate. Residues 293 to 312 (SMSDPGSTYRTRDEISGVRQ) form a disordered region. Positions 302-312 (RTRDEISGVRQ) are enriched in basic and acidic residues.

As to quaternary structure, tetramer of 2 alpha and 2 beta subunits. Thiamine diphosphate serves as cofactor. It depends on Mg(2+) as a cofactor.

The protein localises to the mitochondrion matrix. The catalysed reaction is N(6)-[(R)-lipoyl]-L-lysyl-[protein] + pyruvate + H(+) = N(6)-[(R)-S(8)-acetyldihydrolipoyl]-L-lysyl-[protein] + CO2. The pyruvate dehydrogenase complex catalyzes the overall conversion of pyruvate to acetyl-CoA and CO(2). It contains multiple copies of three enzymatic components: pyruvate dehydrogenase (E1), dihydrolipoamide acetyltransferase (E2) and lipoamide dehydrogenase (E3). The polypeptide is Pyruvate dehydrogenase E1 component subunit alpha-1, mitochondrial (Oryza sativa subsp. japonica (Rice)).